Here is a 1104-residue protein sequence, read N- to C-terminus: Inhibitory regulator protein BUD2/CLA2 (1104 aa).

Serine 2 is subject to N-acetylserine. In terms of domain architecture, C2 spans 316-444 (RSEYLSITGS…RYNKETRLPI (129 aa)). The region spanning 536 to 753 (AKIDGTVSRI…NDLLDYIDKM (218 aa)) is the Ras-GAP domain. A Phosphoserine modification is found at serine 854. The interval 1027-1104 (NPKSSNKTSV…FKKKKETGGS (78 aa)) is disordered. Polar residues-rich tracts occupy residues 1029-1043 (KSSN…SSEN) and 1052-1069 (LPNS…SPTK). Positions 1090-1104 (KLTRWFKKKKETGGS) are enriched in basic residues.

Its function is as follows. Stimulates the GTPase activity of BUD1/RSR1. Participates in the regulation of bud-site selection. The polypeptide is Inhibitory regulator protein BUD2/CLA2 (BUD2) (Saccharomyces cerevisiae (strain ATCC 204508 / S288c) (Baker's yeast)).